A 132-amino-acid chain; its full sequence is MIGLLYRAADRLRRRRYPENHGRIGEDLAHRYLRSQGCTVVARNYRTLAGTGEIDLVVWDGGRLAFVEVKTRSSTDFGPPESAVDAEKRDRLRTAARDYVRRADVDWKAVRFDIVSVILQASPKIEWLRGAF.

The protein belongs to the UPF0102 family.

The protein is UPF0102 protein Acid_2433 of Solibacter usitatus (strain Ellin6076).